Here is a 287-residue protein sequence, read N- to C-terminus: ATP synthase gamma chain (287 aa).

This sequence belongs to the ATPase gamma chain family. As to quaternary structure, F-type ATPases have 2 components, CF(1) - the catalytic core - and CF(0) - the membrane proton channel. CF(1) has five subunits: alpha(3), beta(3), gamma(1), delta(1), epsilon(1). CF(0) has three main subunits: a, b and c.

The protein localises to the cell inner membrane. Its function is as follows. Produces ATP from ADP in the presence of a proton gradient across the membrane. The gamma chain is believed to be important in regulating ATPase activity and the flow of protons through the CF(0) complex. This Parabacteroides distasonis (strain ATCC 8503 / DSM 20701 / CIP 104284 / JCM 5825 / NCTC 11152) protein is ATP synthase gamma chain.